A 231-amino-acid polypeptide reads, in one-letter code: Ribonuclease 3 (231 aa).

One can recognise an RNase III domain in the interval 12–139 (LKAFLQKNNI…LIAAIYLDQG (128 aa)). Glu52 lines the Mg(2+) pocket. The active site involves Asp56. Residues Asp125 and Glu128 each contribute to the Mg(2+) site. The active site involves Glu128. The DRBM domain occupies 165–231 (DPKSELQEYF…AANALSKLKT (67 aa)).

It belongs to the ribonuclease III family. In terms of assembly, homodimer. Mg(2+) serves as cofactor.

It is found in the cytoplasm. The enzyme catalyses Endonucleolytic cleavage to 5'-phosphomonoester.. In terms of biological role, digests double-stranded RNA. Involved in the processing of primary rRNA transcript to yield the immediate precursors to the large and small rRNAs (23S and 16S). Processes some mRNAs, and tRNAs when they are encoded in the rRNA operon. Processes pre-crRNA and tracrRNA of type II CRISPR loci if present in the organism. The polypeptide is Ribonuclease 3 (Mycoplasmopsis synoviae (strain 53) (Mycoplasma synoviae)).